Consider the following 311-residue polypeptide: Putative S-adenosyl-L-methionine-dependent methyltransferase MUL_4761 (311 aa).

Residues Asp-132 and 161-162 each bind S-adenosyl-L-methionine; that span reads DL.

Belongs to the UPF0677 family.

In terms of biological role, exhibits S-adenosyl-L-methionine-dependent methyltransferase activity. This Mycobacterium ulcerans (strain Agy99) protein is Putative S-adenosyl-L-methionine-dependent methyltransferase MUL_4761.